Here is a 649-residue protein sequence, read N- to C-terminus: Solute carrier family 22 member 16 (649 aa).

Residues 19-39 (FQIVLYLICAYQSLSCGIHYL) traverse the membrane as a helical segment. Residues Asn65 and Asn108 are each glycosylated (N-linked (GlcNAc...) asparagine). 5 helical membrane-spanning segments follow: residues 156–176 (MIQP…SYLS), 190–210 (IGVF…SFMI), 214–234 (FLVM…MEII), 244–264 (IHLN…SYLL), and 268–288 (WLYQ…CWML). A glycan (N-linked (GlcNAc...) asparagine) is linked at Asn315. 6 helical membrane-spanning segments follow: residues 356-376 (AKMT…YYMF), 389-409 (LYLL…CIWL), 417-437 (TMLL…VMPS), 445-465 (MVAL…YLYT), 475-495 (CLAV…IPFT), and 501-521 (VWIF…GLLS). Residues 530–544 (TPMKSTWETTEQQVP) are compositionally biased toward polar residues. 2 disordered regions span residues 530–560 (TPMK…SFER) and 579–649 (SPDA…LGGF).

This sequence belongs to the major facilitator (TC 2.A.1) superfamily. Organic cation transporter (TC 2.A.1.19) family.

It is found in the cell membrane. The catalysed reaction is (R)-carnitine(in) = (R)-carnitine(out). It carries out the reaction spermidine(in) = spermidine(out). Facilitative organic cation transporter that mediates the transport of carnitine as well as the polyamine spermidine. Mediates the partially Na(+)-dependent bidirectional transport of carnitine. May mediate L-carnitine secretion from testis epididymal epithelium into the lumen which is involved in the maturation of spermatozoa. The polypeptide is Solute carrier family 22 member 16 (Mus musculus (Mouse)).